We begin with the raw amino-acid sequence, 189 residues long: Elongation factor P (189 aa).

This sequence belongs to the elongation factor P family.

The protein localises to the cytoplasm. The protein operates within protein biosynthesis; polypeptide chain elongation. Involved in peptide bond synthesis. Stimulates efficient translation and peptide-bond synthesis on native or reconstituted 70S ribosomes in vitro. Probably functions indirectly by altering the affinity of the ribosome for aminoacyl-tRNA, thus increasing their reactivity as acceptors for peptidyl transferase. This chain is Elongation factor P, found in Campylobacter fetus subsp. fetus (strain 82-40).